The primary structure comprises 264 residues: Thymidylate synthase (264 aa).

Residue R21 coordinates dUMP. H51 contributes to the (6R)-5,10-methylene-5,6,7,8-tetrahydrofolate binding site. 126-127 (RR) lines the dUMP pocket. C146 acts as the Nucleophile in catalysis. DUMP is bound by residues 166-169 (RSAD), N177, and 207-209 (HIY). D169 provides a ligand contact to (6R)-5,10-methylene-5,6,7,8-tetrahydrofolate. Position 263 (A263) interacts with (6R)-5,10-methylene-5,6,7,8-tetrahydrofolate.

Belongs to the thymidylate synthase family. Bacterial-type ThyA subfamily. In terms of assembly, homodimer.

The protein resides in the cytoplasm. The enzyme catalyses dUMP + (6R)-5,10-methylene-5,6,7,8-tetrahydrofolate = 7,8-dihydrofolate + dTMP. It participates in pyrimidine metabolism; dTTP biosynthesis. In terms of biological role, catalyzes the reductive methylation of 2'-deoxyuridine-5'-monophosphate (dUMP) to 2'-deoxythymidine-5'-monophosphate (dTMP) while utilizing 5,10-methylenetetrahydrofolate (mTHF) as the methyl donor and reductant in the reaction, yielding dihydrofolate (DHF) as a by-product. This enzymatic reaction provides an intracellular de novo source of dTMP, an essential precursor for DNA biosynthesis. In Ruthia magnifica subsp. Calyptogena magnifica, this protein is Thymidylate synthase.